Here is a 121-residue protein sequence, read N- to C-terminus: ATP synthase epsilon chain (121 aa).

Belongs to the ATPase epsilon chain family. As to quaternary structure, F-type ATPases have 2 components, CF(1) - the catalytic core - and CF(0) - the membrane proton channel. CF(1) has five subunits: alpha(3), beta(3), gamma(1), delta(1), epsilon(1). CF(0) has three main subunits: a, b and c.

The protein resides in the cell membrane. In terms of biological role, produces ATP from ADP in the presence of a proton gradient across the membrane. This is ATP synthase epsilon chain (atpC) from Mycobacterium bovis (strain ATCC BAA-935 / AF2122/97).